Consider the following 439-residue polypeptide: D-erythronate kinase (439 aa).

ATP contacts are provided by residues Ser-253, 366–369 (GGDV), and Gly-412.

It belongs to the four-carbon acid sugar kinase family.

The enzyme catalyses D-erythronate + ATP = 4-phospho-D-erythronate + ADP + H(+). Functionally, catalyzes the ATP-dependent phosphorylation of D-erythronate to D-erythronate 4-phosphate. Can also phosphorylate D-threonate and 4-hydroxy-L-threonine, with lower efficiency. This chain is D-erythronate kinase, found in Heliobacterium modesticaldum (strain ATCC 51547 / Ice1).